The chain runs to 172 residues: MALRIEDKKAIVAEVAEQVSSALSAAVADYRGLTVNQMTSLRKQARESGVYLRVVRNNLARLAIKGTEFECLADALKGPLVLALSKDEPGAAAKLFKNFQKDHNAFEVKNLAMSGELFGPEKLDDFAKLPTREEALATLLNIMQAPVTKFVRTLNEIPSQAVRVFAAVGDSK.

This sequence belongs to the universal ribosomal protein uL10 family. As to quaternary structure, part of the ribosomal stalk of the 50S ribosomal subunit. The N-terminus interacts with L11 and the large rRNA to form the base of the stalk. The C-terminus forms an elongated spine to which L12 dimers bind in a sequential fashion forming a multimeric L10(L12)X complex.

Its function is as follows. Forms part of the ribosomal stalk, playing a central role in the interaction of the ribosome with GTP-bound translation factors. This Francisella tularensis subsp. holarctica (strain FTNF002-00 / FTA) protein is Large ribosomal subunit protein uL10.